We begin with the raw amino-acid sequence, 620 residues long: LEAF RUST 10 DISEASE-RESISTANCE LOCUS RECEPTOR-LIKE PROTEIN KINASE-like 2.3 (620 aa).

An N-terminal signal peptide occupies residues 1–30; it reads MDSLSSMGFQTASFFLILLFLFYHLPCVPS. Topologically, residues 31-256 are extracellular; that stretch reads QQERSRLCKP…NNGTYSDNRP (226 aa). N75, N85, N93, N132, N148, N162, N189, N231, and N248 each carry an N-linked (GlcNAc...) asparagine glycan. The helical transmembrane segment at 257 to 277 threads the bilayer; the sequence is FLVTIGTVLGSILCVCVVLFL. The Cytoplasmic portion of the chain corresponds to 278–620; it reads AFYLNERRIA…SVESSIYSEV (343 aa). Residues 314-596 form the Protein kinase domain; the sequence is KSFTEVVGRG…SLDPPPKPLL (283 aa). ATP is bound by residues 320-328 and K342; that span reads VGRGGFGTV. D431 (proton acceptor) is an active-site residue. Residues 586–620 are disordered; it reads DSLDPPPKPLLHMPMQNNNAESSQLSVESSIYSEV. A compositionally biased stretch (polar residues) spans 600 to 620; sequence MQNNNAESSQLSVESSIYSEV.

It belongs to the protein kinase superfamily. Ser/Thr protein kinase family.

The protein resides in the membrane. The catalysed reaction is L-seryl-[protein] + ATP = O-phospho-L-seryl-[protein] + ADP + H(+). It carries out the reaction L-threonyl-[protein] + ATP = O-phospho-L-threonyl-[protein] + ADP + H(+). The polypeptide is LEAF RUST 10 DISEASE-RESISTANCE LOCUS RECEPTOR-LIKE PROTEIN KINASE-like 2.3 (Arabidopsis thaliana (Mouse-ear cress)).